The chain runs to 756 residues: Catalase-peroxidase (756 aa).

The segment at residues 91–244 is a cross-link (tryptophyl-tyrosyl-methioninium (Trp-Tyr) (with M-270)); that stretch reads WHSAGTYRTG…LAAVQMGLIY (154 aa). Residue His-92 is the Proton acceptor of the active site. The disordered stretch occupies residues 198–230; it reads AQKKMQQPGDGTLVAEPENHANEESRTASGERN. A compositionally biased stretch (basic and acidic residues) spans 214–223; that stretch reads PENHANEESR. A cross-link (tryptophyl-tyrosyl-methioninium (Tyr-Met) (with W-91)) is located at residues 244–270; the sequence is YVNPEGPEGVPDPVASARDIRETFGRM. His-285 serves as a coordination point for heme b.

This sequence belongs to the peroxidase family. Peroxidase/catalase subfamily. In terms of assembly, homodimer or homotetramer. It depends on heme b as a cofactor. Formation of the three residue Trp-Tyr-Met cross-link is important for the catalase, but not the peroxidase activity of the enzyme.

The catalysed reaction is H2O2 + AH2 = A + 2 H2O. It catalyses the reaction 2 H2O2 = O2 + 2 H2O. Functionally, bifunctional enzyme with both catalase and broad-spectrum peroxidase activity. This chain is Catalase-peroxidase, found in Pseudomonas syringae pv. syringae (strain B728a).